Reading from the N-terminus, the 159-residue chain is Ribonuclease H (159 aa).

One can recognise an RNase H type-1 domain in the interval Asn8–Lys150. Mg(2+) is bound by residues Asp17, Glu55, Asp77, and Asp142.

Belongs to the RNase H family. In terms of assembly, monomer. It depends on Mg(2+) as a cofactor.

The protein localises to the cytoplasm. It catalyses the reaction Endonucleolytic cleavage to 5'-phosphomonoester.. Its function is as follows. Endonuclease that specifically degrades the RNA of RNA-DNA hybrids. This Desulforamulus reducens (strain ATCC BAA-1160 / DSM 100696 / MI-1) (Desulfotomaculum reducens) protein is Ribonuclease H.